An 80-amino-acid chain; its full sequence is MSGLGIMVLTLLLLVSMATSHQDGGGKQATQRDAINVRRRRSITRREVVTEECEEYCKEQNKTCCGLTNGRPRCVGVCFG.

An N-terminal signal peptide occupies residues 1–20 (MSGLGIMVLTLLLLVSMATS). A propeptide spanning residues 21–44 (HQDGGGKQATQRDAINVRRRRSIT) is cleaved from the precursor. Disulfide bonds link Cys-53-Cys-65, Cys-57-Cys-74, and Cys-64-Cys-78. Phe-79 carries the post-translational modification Phenylalanine amide.

This sequence belongs to the conotoxin O3 superfamily. Expressed by the venom duct.

It is found in the secreted. This chain is Conotoxin VnMSGL-0123, found in Conus ventricosus (Mediterranean cone).